Here is a 123-residue protein sequence, read N- to C-terminus: Small ribosomal subunit protein uS12 (123 aa).

3-methylthioaspartic acid is present on aspartate 89.

The protein belongs to the universal ribosomal protein uS12 family. In terms of assembly, part of the 30S ribosomal subunit. Contacts proteins S8 and S17. May interact with IF1 in the 30S initiation complex.

Its function is as follows. With S4 and S5 plays an important role in translational accuracy. In terms of biological role, interacts with and stabilizes bases of the 16S rRNA that are involved in tRNA selection in the A site and with the mRNA backbone. Located at the interface of the 30S and 50S subunits, it traverses the body of the 30S subunit contacting proteins on the other side and probably holding the rRNA structure together. The combined cluster of proteins S8, S12 and S17 appears to hold together the shoulder and platform of the 30S subunit. The polypeptide is Small ribosomal subunit protein uS12 (Nitrobacter winogradskyi (strain ATCC 25391 / DSM 10237 / CIP 104748 / NCIMB 11846 / Nb-255)).